A 927-amino-acid chain; its full sequence is Huntington interacting protein related 1 (927 aa).

An ENTH domain is found at 7–136 (AREVFVRAQL…TFHNKYPVVP (130 aa)). The stretch at 336 to 524 (RAVEDEKFAK…RESHANQLVQ (189 aa)) forms a coiled coil. The I/LWEQ domain maps to 673–914 (QTDIDKDVVG…ALRKQHYHMA (242 aa)).

Belongs to the SLA2 family.

The protein localises to the cytoplasm. The protein resides in the cytoskeleton. Functionally, regulates pre-synaptic vesicle recycling at neuromuscular junctions of mechanosensory neurons. Plays a role in maintaining a normal defecation cycle. The chain is Huntington interacting protein related 1 (hipr-1) from Caenorhabditis elegans.